The primary structure comprises 442 residues: Interferon-related developmental regulator 2 (442 aa).

Residues 1 to 15 (MPRARKGNTLRKGGQ) are compositionally biased toward basic residues. The tract at residues 1 to 71 (MPRARKGNTL…DVVDEQGQQE (71 aa)) is disordered. Residues 43–56 (TASECPSLLSTTAE) show a composition bias toward polar residues.

This sequence belongs to the IFRD family. Associates with ribosomes; promoting ribosome inactivation. In terms of tissue distribution, expressed in many tissues including heart, brain, placenta, lung, liver, skeletal muscle, kidney and pancreas.

In terms of biological role, ribosome-binding protein that acts as an inhibitor of mRNA translation by promoting ribosome inactivation. Associates with the P- and E-sites of the ribosome and inserts a C-terminal helix into the mRNA exit channel to preclude translation. This Homo sapiens (Human) protein is Interferon-related developmental regulator 2.